Reading from the N-terminus, the 94-residue chain is Co-chaperonin GroES (94 aa).

The protein belongs to the GroES chaperonin family. Heptamer of 7 subunits arranged in a ring. Interacts with the chaperonin GroEL.

The protein localises to the cytoplasm. Together with the chaperonin GroEL, plays an essential role in assisting protein folding. The GroEL-GroES system forms a nano-cage that allows encapsulation of the non-native substrate proteins and provides a physical environment optimized to promote and accelerate protein folding. GroES binds to the apical surface of the GroEL ring, thereby capping the opening of the GroEL channel. This is Co-chaperonin GroES from Bacillus mycoides (strain KBAB4) (Bacillus weihenstephanensis).